The sequence spans 320 residues: tRNA uridine(34) hydroxylase (320 aa).

A Rhodanese domain is found at 123–217; that stretch reads EDENTVILDA…YGKDPETKGL (95 aa). Cys-177 acts as the Cysteine persulfide intermediate in catalysis.

The protein belongs to the TrhO family.

It carries out the reaction uridine(34) in tRNA + AH2 + O2 = 5-hydroxyuridine(34) in tRNA + A + H2O. Its function is as follows. Catalyzes oxygen-dependent 5-hydroxyuridine (ho5U) modification at position 34 in tRNAs. In Staphylococcus epidermidis (strain ATCC 35984 / DSM 28319 / BCRC 17069 / CCUG 31568 / BM 3577 / RP62A), this protein is tRNA uridine(34) hydroxylase.